Reading from the N-terminus, the 190-residue chain is Elongation factor P-like protein (190 aa).

This sequence belongs to the elongation factor P family.

The sequence is that of Elongation factor P-like protein from Serratia proteamaculans (strain 568).